The chain runs to 214 residues: rRNA methyltransferase 2, mitochondrial (214 aa).

The transit peptide at 1–18 directs the protein to the mitochondrion; that stretch reads MFSTKKSQGNLHKYIQRQ. S-adenosyl-L-methionine is bound by residues 63–66, Asp-83, 100–101, and Asp-125; these read PGSW and DI. The active-site Proton acceptor is Lys-169.

Belongs to the class I-like SAM-binding methyltransferase superfamily. RNA methyltransferase RlmE family.

It localises to the mitochondrion. It catalyses the reaction a uridine in rRNA + S-adenosyl-L-methionine = a 2'-O-methyluridine in rRNA + S-adenosyl-L-homocysteine + H(+). Its function is as follows. S-adenosyl-L-methionine-dependent 2'-O-ribose methyltransferase that catalyzes the formation of 2'-O-methyluridine at position 808 (Um808) in the mitochondrial large subunit ribosomal RNA (mtLSU rRNA), a universally conserved modification in the peptidyl transferase domain of the mtLSU rRNA. This activity may require prior 2'-O-methylguanosine modification at position 809 (Gm809) by MRM3. Essential for late-stage assembly of mtLSU required for efficient translation of mitochondrial DNA encoded proteins; methyltransferase activity is not required for this function. Essential for mitochondrial respiratory function. The sequence is that of rRNA methyltransferase 2, mitochondrial from Caenorhabditis elegans.